The primary structure comprises 216 residues: uncharacterized protein (216 aa).

Residues 5–22 form a helical membrane-spanning segment; that stretch reads LGLVFGSVILIYLISLFL.

It is found in the membrane. This is an uncharacterized protein from Aquifex aeolicus (strain VF5).